A 243-amino-acid polypeptide reads, in one-letter code: R-spondin-2 (243 aa).

Positions 1–21 are cleaved as a signal peptide; sequence MQFQLFSFVLIILNCVDYSHC. Cystine bridges form between C40-C46, C43-C52, C55-C74, C78-C93, C96-C104, C101-C110, C113-C124, C128-C141, C145-C187, C156-C163, and C196-C203. The stretch at 90-134 is one FU repeat; sequence MNRCSRCRIENCDSCFSRDFCIKCKSGFYSHKGQCFEECPEGFAP. The region spanning 144–204 is the TSP type-1 domain; that stretch reads GCEVGPWSEW…RCKMAMRHCP (61 aa). N160 carries N-linked (GlcNAc...) asparagine glycosylation. The tract at residues 202–243 is disordered; sequence HCPGGTRTTKKKDKKNKKKKKKLLERAQEQHSVVLATDRSSQ. Residues 209–224 are compositionally biased toward basic residues; that stretch reads TTKKKDKKNKKKKKKL.

Belongs to the R-spondin family. In terms of assembly, binds heparin.

Its subcellular location is the secreted. Activator of the canonical Wnt signaling pathway by acting as a ligand for lgr4-6 receptors. Upon binding to lgr4-6 (lgr4, lgr5 or lgr6), lgr4-6 associate with phosphorylated lrp6 and frizzled receptors that are activated by extracellular Wnt receptors, triggering the canonical Wnt signaling pathway to increase expression of target genes. Acts both in the canonical. Wnt/beta-catenin-dependent pathway and in non-canonical Wnt signaling pathway. Activates neural markers and promotes muscle formation. Overexpression blocks activin, nodal and BMP4 signaling, suggesting that it may negatively regulate the TGF-beta pathway. During embryonic development, plays a crucial role in limb specification, amplifying the Wnt signaling pathway independently of LGR4-6 receptors, possibly by acting as a direct antagonistic ligand to RNF43 and ZNRF3, hence governing the number of limbs an embryo should form. The protein is R-spondin-2 (rspo2) of Xenopus tropicalis (Western clawed frog).